A 285-amino-acid chain; its full sequence is uncharacterized protein (285 aa).

Ser168 is a substrate binding site. Residue Tyr181 is the Proton acceptor of the active site.

It belongs to the short-chain dehydrogenases/reductases (SDR) family.

This is an uncharacterized protein from Haemophilus influenzae (strain ATCC 51907 / DSM 11121 / KW20 / Rd).